We begin with the raw amino-acid sequence, 769 residues long: Trehalose 6-phosphate phosphorylase (769 aa).

342–343 (WD) contacts substrate. E480 serves as the catalytic Proton donor. 589–590 (KQ) serves as a coordination point for substrate.

The protein belongs to the glycosyl hydrolase 65 family. As to quaternary structure, monomer.

It carries out the reaction alpha,alpha-trehalose 6-phosphate + phosphate = beta-D-glucose 1-phosphate + D-glucose 6-phosphate. In terms of biological role, catalyzes the conversion of trehalose 6-phosphate into glucose 1-phosphate and glucose 6-phosphate. In Lactococcus lactis subsp. lactis (strain IL1403) (Streptococcus lactis), this protein is Trehalose 6-phosphate phosphorylase (trePP).